Reading from the N-terminus, the 288-residue chain is Bifunctional protein FolD (288 aa).

NADP(+)-binding positions include 166–168 and Ile-232; that span reads GAS.

The protein belongs to the tetrahydrofolate dehydrogenase/cyclohydrolase family. In terms of assembly, homodimer.

It catalyses the reaction (6R)-5,10-methylene-5,6,7,8-tetrahydrofolate + NADP(+) = (6R)-5,10-methenyltetrahydrofolate + NADPH. The enzyme catalyses (6R)-5,10-methenyltetrahydrofolate + H2O = (6R)-10-formyltetrahydrofolate + H(+). It functions in the pathway one-carbon metabolism; tetrahydrofolate interconversion. Functionally, catalyzes the oxidation of 5,10-methylenetetrahydrofolate to 5,10-methenyltetrahydrofolate and then the hydrolysis of 5,10-methenyltetrahydrofolate to 10-formyltetrahydrofolate. The chain is Bifunctional protein FolD from Escherichia coli (strain UTI89 / UPEC).